The sequence spans 488 residues: Cobyric acid synthase (488 aa).

In terms of domain architecture, GATase cobBQ-type spans leucine 247–alanine 440. Residue cysteine 328 is the Nucleophile of the active site. The active site involves histidine 432.

It belongs to the CobB/CobQ family. CobQ subfamily.

It functions in the pathway cofactor biosynthesis; adenosylcobalamin biosynthesis. Catalyzes amidations at positions B, D, E, and G on adenosylcobyrinic A,C-diamide. NH(2) groups are provided by glutamine, and one molecule of ATP is hydrogenolyzed for each amidation. This is Cobyric acid synthase from Cupriavidus pinatubonensis (strain JMP 134 / LMG 1197) (Cupriavidus necator (strain JMP 134)).